The chain runs to 73 residues: Putative membrane protein insertion efficiency factor (73 aa).

This sequence belongs to the UPF0161 family.

The protein localises to the cell inner membrane. In terms of biological role, could be involved in insertion of integral membrane proteins into the membrane. The sequence is that of Putative membrane protein insertion efficiency factor from Rickettsia bellii (strain RML369-C).